The following is a 1439-amino-acid chain: Receptor-type tyrosine-protein phosphatase kappa (1439 aa).

The N-terminal stretch at 1–26 (MDTTAAAALPAFVALLLLSPWPLLGS) is a signal peptide. The Extracellular portion of the chain corresponds to 27–752 (AQGQFSAGGC…PAKQTDRVVK (726 aa)). The MAM domain occupies 31–194 (FSAGGCTFDD…IQVLSYPCDK (164 aa)). N101, N140, and N211 each carry an N-linked (GlcNAc...) asparagine glycan. In terms of domain architecture, Ig-like C2-type spans 196-281 (PHFLRLGDVE…TQSERGSGVS (86 aa)). Cysteines 216 and 270 form a disulfide. 4 consecutive Fibronectin type-III domains span residues 294–389 (PIAP…CAEP), 392–488 (TPKT…TDED), 491–595 (GPVP…SAPT), and 597–680 (PDYE…GNLP). 9 N-linked (GlcNAc...) asparagine glycosylation sites follow: N416, N424, N436, N462, N552, N586, N590, N607, and N690. The chain crosses the membrane as a helical span at residues 753 to 774 (IAGISAGILVFILLLLVVILIV). The Cytoplasmic segment spans residues 775 to 1439 (KKSKLAKKRK…DVALEYLESS (665 aa)). S856 bears the Phosphoserine mark. Tyrosine-protein phosphatase domains are found at residues 887-1141 (FKEE…ILEA) and 1173-1435 (LKDE…ALEY). Substrate is bound by residues D1050, 1082 to 1088 (CSAGAGR), and Q1126. C1082 (phosphocysteine intermediate) is an active-site residue. Catalysis depends on C1376, which acts as the Phosphocysteine intermediate.

The protein belongs to the protein-tyrosine phosphatase family. Receptor class 2B subfamily. This protein undergoes proteolytic processing. High levels in lung, brain and colon; less in liver, pancreas, stomach, kidney, placenta and mammary carcinoma.

Its subcellular location is the cell junction. The protein localises to the adherens junction. It is found in the cell membrane. It carries out the reaction O-phospho-L-tyrosyl-[protein] + H2O = L-tyrosyl-[protein] + phosphate. Its function is as follows. Regulation of processes involving cell contact and adhesion such as growth control, tumor invasion, and metastasis. Negative regulator of EGFR signaling pathway. Forms complexes with beta-catenin and gamma-catenin/plakoglobin. Beta-catenin may be a substrate for the catalytic activity of PTPRK/PTP-kappa. The polypeptide is Receptor-type tyrosine-protein phosphatase kappa (PTPRK) (Homo sapiens (Human)).